Reading from the N-terminus, the 939-residue chain is Isoleucine--tRNA ligase (939 aa).

The short motif at 57–67 is the 'HIGH' region element; that stretch reads PYANGEIHIGH. Glutamate 563 contacts L-isoleucyl-5'-AMP. Residues 604–608 carry the 'KMSKS' region motif; sequence KMSKS. Lysine 607 provides a ligand contact to ATP. Zn(2+)-binding residues include cysteine 902, cysteine 905, cysteine 922, and cysteine 925.

This sequence belongs to the class-I aminoacyl-tRNA synthetase family. IleS type 1 subfamily. In terms of assembly, monomer. The cofactor is Zn(2+).

Its subcellular location is the cytoplasm. It catalyses the reaction tRNA(Ile) + L-isoleucine + ATP = L-isoleucyl-tRNA(Ile) + AMP + diphosphate. Catalyzes the attachment of isoleucine to tRNA(Ile). As IleRS can inadvertently accommodate and process structurally similar amino acids such as valine, to avoid such errors it has two additional distinct tRNA(Ile)-dependent editing activities. One activity is designated as 'pretransfer' editing and involves the hydrolysis of activated Val-AMP. The other activity is designated 'posttransfer' editing and involves deacylation of mischarged Val-tRNA(Ile). The polypeptide is Isoleucine--tRNA ligase (Methylococcus capsulatus (strain ATCC 33009 / NCIMB 11132 / Bath)).